The following is a 187-amino-acid chain: Ion-translocating oxidoreductase complex subunit B (187 aa).

The interval 1 to 23 is hydrophobic; sequence MIAAAASMSALGLGLGYLLGAAA. In terms of domain architecture, 4Fe-4S spans 29–88; sequence ETPPIVEEIAKILPGTNCGACGFPGCNGLAEAMAEGNAPVTACTPGGRDVALALAEIVTV. Positions 46, 49, 54, 71, 112, 115, 118, 122, 142, 145, 148, and 152 each coordinate [4Fe-4S] cluster. 4Fe-4S ferredoxin-type domains lie at 103-132 and 133-162; these read MVAFVFEDHCTGCQKCFKRCPTDAIVGGAK and QIHTVVMDACIGCDACIEVCPTEAIVSRVK.

The protein belongs to the 4Fe4S bacterial-type ferredoxin family. RnfB subfamily. In terms of assembly, the complex is composed of six subunits: RnfA, RnfB, RnfC, RnfD, RnfE and RnfG. The cofactor is [4Fe-4S] cluster.

Its subcellular location is the cellular chromatophore membrane. Part of a membrane-bound complex that couples electron transfer with translocation of ions across the membrane. Required for nitrogen fixation. Involved in electron transfer to nitrogenase. This Rhodobacter capsulatus (Rhodopseudomonas capsulata) protein is Ion-translocating oxidoreductase complex subunit B.